A 198-amino-acid polypeptide reads, in one-letter code: Pyridoxal 5'-phosphate synthase subunit PdxT (198 aa).

L-glutamine is bound at residue 49 to 51 (GES). Cys-81 (nucleophile) is an active-site residue. L-glutamine is bound by residues Arg-112 and 140 to 141 (IR). Active-site charge relay system residues include His-176 and Glu-178.

It belongs to the glutaminase PdxT/SNO family. As to quaternary structure, in the presence of PdxS, forms a dodecamer of heterodimers. Only shows activity in the heterodimer.

It carries out the reaction aldehydo-D-ribose 5-phosphate + D-glyceraldehyde 3-phosphate + L-glutamine = pyridoxal 5'-phosphate + L-glutamate + phosphate + 3 H2O + H(+). The catalysed reaction is L-glutamine + H2O = L-glutamate + NH4(+). It functions in the pathway cofactor biosynthesis; pyridoxal 5'-phosphate biosynthesis. Catalyzes the hydrolysis of glutamine to glutamate and ammonia as part of the biosynthesis of pyridoxal 5'-phosphate. The resulting ammonia molecule is channeled to the active site of PdxS. In Methanocella arvoryzae (strain DSM 22066 / NBRC 105507 / MRE50), this protein is Pyridoxal 5'-phosphate synthase subunit PdxT.